We begin with the raw amino-acid sequence, 339 residues long: Protein-lysine N-methyltransferase EFM3 (339 aa).

Residues tryptophan 137 and 174-176 (GAG) each bind S-adenosyl-L-methionine. Position 177 is a phosphothreonine (threonine 177). 3 residues coordinate S-adenosyl-L-methionine: aspartate 199, tryptophan 233, and alanine 248.

It belongs to the class I-like SAM-binding methyltransferase superfamily. EEF2KMT family.

Its subcellular location is the cytoplasm. Its function is as follows. S-adenosyl-L-methionine-dependent protein-lysine N-methyltransferase that mono-, di- and trimethylates elongation factor 2 (EFT1/EFT2) at 'Lys-509'. The polypeptide is Protein-lysine N-methyltransferase EFM3 (Saccharomyces cerevisiae (strain ATCC 204508 / S288c) (Baker's yeast)).